A 211-amino-acid polypeptide reads, in one-letter code: Guanylate kinase (211 aa).

The Guanylate kinase-like domain maps to 5 to 184 (GLLIVFSGPS…AAERVKRIIE (180 aa)). 12 to 19 (GPSGVGKG) contacts ATP.

Belongs to the guanylate kinase family.

The protein resides in the cytoplasm. It catalyses the reaction GMP + ATP = GDP + ADP. Its function is as follows. Essential for recycling GMP and indirectly, cGMP. The protein is Guanylate kinase of Streptococcus pyogenes serotype M1.